Consider the following 295-residue polypeptide: Deoxyuridine 5'-triphosphate nucleotidohydrolase (295 aa).

178–180 is a binding site for substrate; that stretch reads RSG. Positions 260 to 272 are enriched in basic and acidic residues; it reads NSVRKHTHEDNPV. Residues 260-295 are disordered; the sequence is NSVRKHTHEDNPVHEPNVATASADIRGTKGLGSSGF.

Belongs to the dUTPase family. Mg(2+) is required as a cofactor.

The enzyme catalyses dUTP + H2O = dUMP + diphosphate + H(+). Its function is as follows. Involved in nucleotide metabolism: produces dUMP, the immediate precursor of thymidine nucleotides and decreases the intracellular concentration of dUTP to avoid uracil incorporation into viral DNA. The chain is Deoxyuridine 5'-triphosphate nucleotidohydrolase from Human herpesvirus 8 type P (isolate GK18) (HHV-8).